Here is a 511-residue protein sequence, read N- to C-terminus: Bifunctional purine biosynthesis protein PurH (511 aa).

An MGS-like domain is found at 1-145; sequence MKKRALVSVS…KNHKFVSVIV (145 aa).

Belongs to the PurH family.

The enzyme catalyses (6R)-10-formyltetrahydrofolate + 5-amino-1-(5-phospho-beta-D-ribosyl)imidazole-4-carboxamide = 5-formamido-1-(5-phospho-D-ribosyl)imidazole-4-carboxamide + (6S)-5,6,7,8-tetrahydrofolate. It carries out the reaction IMP + H2O = 5-formamido-1-(5-phospho-D-ribosyl)imidazole-4-carboxamide. Its pathway is purine metabolism; IMP biosynthesis via de novo pathway; 5-formamido-1-(5-phospho-D-ribosyl)imidazole-4-carboxamide from 5-amino-1-(5-phospho-D-ribosyl)imidazole-4-carboxamide (10-formyl THF route): step 1/1. It functions in the pathway purine metabolism; IMP biosynthesis via de novo pathway; IMP from 5-formamido-1-(5-phospho-D-ribosyl)imidazole-4-carboxamide: step 1/1. In Bacillus cereus (strain ATCC 10987 / NRS 248), this protein is Bifunctional purine biosynthesis protein PurH.